Here is a 338-residue protein sequence, read N- to C-terminus: tRNA (cytosine(34)-C(5))-methyltransferase, mitochondrial (338 aa).

S-adenosyl-L-methionine-binding positions include 140-146 (CAAPGGK), glutamate 163, aspartate 194, and aspartate 212. Residue cysteine 266 is the Nucleophile of the active site.

Belongs to the class I-like SAM-binding methyltransferase superfamily. RsmB/NOP family.

The protein resides in the mitochondrion matrix. It carries out the reaction cytidine(34) in mitochondrial tRNA + S-adenosyl-L-methionine = 5-methylcytidine(34) in mitochondrial tRNA + S-adenosyl-L-homocysteine + H(+). Mitochondrial tRNA methyltransferase that mediates methylation of cytosine to 5-methylcytosine (m5C) at position 34 of mt-tRNA(Met). mt-tRNA(Met) methylation at cytosine(34) takes place at the wobble position of the anticodon and initiates the formation of 5-formylcytosine (f(5)c) at this position. mt-tRNA(Met) containing the f(5)c modification at the wobble position enables recognition of the AUA codon in addition to the AUG codon, expanding codon recognition in mitochondrial translation. This chain is tRNA (cytosine(34)-C(5))-methyltransferase, mitochondrial, found in Bos taurus (Bovine).